Consider the following 445-residue polypeptide: tRNA-2-methylthio-N(6)-dimethylallyladenosine synthase (445 aa).

Positions 2 to 117 (QGLYIKSYGC…LPELIVKARK (116 aa)) constitute an MTTase N-terminal domain. The [4Fe-4S] cluster site is built by Cys-11, Cys-47, Cys-80, Cys-157, Cys-161, and Cys-164. Positions 143–374 (KNQKVSAFIS…QELVHKQQLE (232 aa)) constitute a Radical SAM core domain. In terms of domain architecture, TRAM spans 377–441 (KKMIGETHPV…KNHLTGIIPN (65 aa)).

This sequence belongs to the methylthiotransferase family. MiaB subfamily. As to quaternary structure, monomer. The cofactor is [4Fe-4S] cluster.

Its subcellular location is the cytoplasm. It catalyses the reaction N(6)-dimethylallyladenosine(37) in tRNA + (sulfur carrier)-SH + AH2 + 2 S-adenosyl-L-methionine = 2-methylsulfanyl-N(6)-dimethylallyladenosine(37) in tRNA + (sulfur carrier)-H + 5'-deoxyadenosine + L-methionine + A + S-adenosyl-L-homocysteine + 2 H(+). Catalyzes the methylthiolation of N6-(dimethylallyl)adenosine (i(6)A), leading to the formation of 2-methylthio-N6-(dimethylallyl)adenosine (ms(2)i(6)A) at position 37 in tRNAs that read codons beginning with uridine. The protein is tRNA-2-methylthio-N(6)-dimethylallyladenosine synthase of Ehrlichia ruminantium (strain Welgevonden).